We begin with the raw amino-acid sequence, 51 residues long: VSIDCSGYPKPACTLEFFPLCGSDNQTYSNKCAFCNAAVEKNVTLNHIGEC.

The Kazal-like domain occupies Ile-3 to Cys-51. Intrachain disulfides connect Cys-5–Cys-35, Cys-13–Cys-32, and Cys-21–Cys-51. Asn-42 carries N-linked (GlcNAc...) asparagine glycosylation.

Its subcellular location is the secreted. The sequence is that of Ovomucoid from Eudromia elegans (Elegant crested-tinamou).